We begin with the raw amino-acid sequence, 107 residues long: Cytochrome c oxidase assembly protein COX16 homolog, mitochondrial (107 aa).

Topologically, residues 1 to 14 (MFGYAVRRALRKSK) are mitochondrial matrix. Residues 15 to 37 (TLRYGVPMLLLIVGGSFGLREFS) traverse the membrane as a helical segment. The Mitochondrial intermembrane segment spans residues 38-107 (QIRYDAVKIK…PEILKTNKTT (70 aa)). Residues 80–107 (NIRGPRPWEDPDLLQGRNPEILKTNKTT) are disordered.

The protein belongs to the COX16 family. In terms of assembly, associates with the MITRAC complex. Interacts with MT-CO2/COX; specifically interacts with newly synthesized MT-CO2/COX. Interacts with SCO1, SCO2 and COA6.

The protein localises to the mitochondrion inner membrane. In terms of biological role, required for the assembly of the mitochondrial respiratory chain complex IV (CIV), also known as cytochrome c oxidase. Promotes the insertion of copper into the active site of cytochrome c oxidase subunit II (MT-CO2/COX2). Interacts specifically with newly synthesized MT-CO2/COX and its copper center-forming metallochaperones SCO1, SCO2 and COA6. Probably facilitates MT-CO2/COX2 association with the MITRAC assembly intermediate containing MT-CO1/COX1, thereby participating in merging the MT-CO1/COX1 and MT-CO2/COX2 assembly lines. In Bos taurus (Bovine), this protein is Cytochrome c oxidase assembly protein COX16 homolog, mitochondrial.